Reading from the N-terminus, the 387-residue chain is 1-deoxy-D-xylulose 5-phosphate reductoisomerase (387 aa).

NADPH contacts are provided by Thr10, Gly11, Ile13, Asn38, and Asn122. Lys123 contributes to the 1-deoxy-D-xylulose 5-phosphate binding site. An NADPH-binding site is contributed by Glu124. Asp148 is a binding site for Mn(2+). The 1-deoxy-D-xylulose 5-phosphate site is built by Ser149, Glu150, Ser174, and His197. A Mn(2+)-binding site is contributed by Glu150. Gly203 contributes to the NADPH binding site. Positions 210, 215, 216, and 219 each coordinate 1-deoxy-D-xylulose 5-phosphate. Glu219 contributes to the Mn(2+) binding site.

Belongs to the DXR family. Mg(2+) is required as a cofactor. Mn(2+) serves as cofactor.

It carries out the reaction 2-C-methyl-D-erythritol 4-phosphate + NADP(+) = 1-deoxy-D-xylulose 5-phosphate + NADPH + H(+). It participates in isoprenoid biosynthesis; isopentenyl diphosphate biosynthesis via DXP pathway; isopentenyl diphosphate from 1-deoxy-D-xylulose 5-phosphate: step 1/6. Its function is as follows. Catalyzes the NADPH-dependent rearrangement and reduction of 1-deoxy-D-xylulose-5-phosphate (DXP) to 2-C-methyl-D-erythritol 4-phosphate (MEP). The chain is 1-deoxy-D-xylulose 5-phosphate reductoisomerase from Ehrlichia canis (strain Jake).